We begin with the raw amino-acid sequence, 81 residues long: Photosystem I iron-sulfur center (81 aa).

4Fe-4S ferredoxin-type domains follow at residues 2 to 31 and 39 to 68; these read SHSV…MVPW and IASA…VRVY. Cys11, Cys14, Cys17, Cys21, Cys48, Cys51, Cys54, and Cys58 together coordinate [4Fe-4S] cluster.

In terms of assembly, the eukaryotic PSI reaction center is composed of at least 11 subunits. [4Fe-4S] cluster serves as cofactor.

The protein localises to the plastid. It is found in the chloroplast thylakoid membrane. It carries out the reaction reduced [plastocyanin] + hnu + oxidized [2Fe-2S]-[ferredoxin] = oxidized [plastocyanin] + reduced [2Fe-2S]-[ferredoxin]. Functionally, apoprotein for the two 4Fe-4S centers FA and FB of photosystem I (PSI); essential for photochemical activity. FB is the terminal electron acceptor of PSI, donating electrons to ferredoxin. The C-terminus interacts with PsaA/B/D and helps assemble the protein into the PSI complex. Required for binding of PsaD and PsaE to PSI. PSI is a plastocyanin/cytochrome c6-ferredoxin oxidoreductase, converting photonic excitation into a charge separation, which transfers an electron from the donor P700 chlorophyll pair to the spectroscopically characterized acceptors A0, A1, FX, FA and FB in turn. The polypeptide is Photosystem I iron-sulfur center (Nephroselmis olivacea (Green alga)).